A 254-amino-acid polypeptide reads, in one-letter code: Transmembrane protein 269 (254 aa).

5 helical membrane-spanning segments follow: residues 44-64 (IINALALANMILGLFSIFCSF), 69-89 (YCASWMLLISFLLDIAIGTMT), 113-135 (LASALLLGVDGPLNGFLAIIYVL), 171-191 (LTKGNTFILCCMASLMILFMI), and 210-230 (IVYIGGVILLFFSPFPLTAFY).

It localises to the membrane. In Mus musculus (Mouse), this protein is Transmembrane protein 269.